Here is a 347-residue protein sequence, read N- to C-terminus: Protein XRP2 (347 aa).

Residues 1 to 11 (MGCCFTKRRKS) are compositionally biased toward basic residues. Residues 1-22 (MGCCFTKRRKSEKAEGEEEQPK) form a disordered region. Residue Gly-2 is the site of N-myristoyl glycine attachment. Residue Cys-3 is the site of S-palmitoyl cysteine attachment. One can recognise a C-CAP/cofactor C-like domain in the interval 21-176 (PKLYSWDQRE…IWSHVHDFTP (156 aa)). GTP contacts are provided by residues 95-96 (GS) and 112-115 (QQFR).

This sequence belongs to the TBCC family. Found in a complex with ARL3, RP2 and UNC119 (or UNC119B); RP2 induces hydrolysis of GTP ARL3 in the complex, leading to the release of UNC119 (or UNC119B). Interacts with ARL3; interaction is direct and stimulated with the activated GTP-bound form of ARL3. Post-translationally, myristoylated on Gly-2; which may be required for membrane targeting. Palmitoylated on Cys-3; which may be required for plasma membrane targeting. Retina (at protein level).

It localises to the cell membrane. The protein localises to the cell projection. It is found in the cilium. Functionally, acts as a GTPase-activating protein (GAP) involved in trafficking between the Golgi and the ciliary membrane. Involved in localization of proteins, such as NPHP3, to the cilium membrane by inducing hydrolysis of GTP ARL3, leading to the release of UNC119 (or UNC119B). Acts as a GTPase-activating protein (GAP) for tubulin in concert with tubulin-specific chaperone C, but does not enhance tubulin heterodimerization. Acts as a guanine nucleotide dissociation inhibitor towards ADP-ribosylation factor-like proteins. In Mus musculus (Mouse), this protein is Protein XRP2 (Rp2).